Here is a 102-residue protein sequence, read N- to C-terminus: DNA/RNA-binding protein Alba 2 (102 aa).

Residues arginine 10, arginine 13, arginine 40, arginine 42, asparagine 43, arginine 46, and arginine 86 each contribute to the DNA site.

It belongs to the histone-like Alba family. As to quaternary structure, forms homodimers and homotetramers; oligomerization is enhanced and stabilized by DNA. Interacts with Alba 1.

The protein resides in the cytoplasm. Its subcellular location is the chromosome. Binds double-stranded DNA tightly but without sequence specificity. Involved in DNA compaction. The protein is DNA/RNA-binding protein Alba 2 of Aeropyrum pernix (strain ATCC 700893 / DSM 11879 / JCM 9820 / NBRC 100138 / K1).